A 185-amino-acid chain; its full sequence is CASP-like protein 2D1 (185 aa).

Over 1–15 the chain is Cytoplasmic; the sequence is MRTHIDDSASGKNHH. A helical membrane pass occupies residues 16–36; the sequence is LPMLWFFDSSLRLCAIPLSVA. Topologically, residues 37-64 are extracellular; the sequence is TMWITVTNKEDNSSYGMLKYNNLSALKY. Asparagine 48 and asparagine 58 each carry an N-linked (GlcNAc...) asparagine glycan. Residues 65-85 form a helical membrane-spanning segment; sequence MVLVSALCACYALLAAACSLV. Topologically, residues 86–92 are cytoplasmic; the sequence is RCFVSKA. The chain crosses the membrane as a helical span at residues 93 to 113; it reads WIFFVSDQIVAYLAITSVAAV. Residues 114-145 lie on the Extracellular side of the membrane; the sequence is MEMYYLAYNGAKEDSWSEACSSYGSFCSKVKL. A helical membrane pass occupies residues 146-166; the sequence is ALILHTITFCCFFVIAVISAF. The Cytoplasmic portion of the chain corresponds to 167–185; that stretch reads RAFSVFDPPFVNSQEVQGD.

This sequence belongs to the Casparian strip membrane proteins (CASP) family. Homodimer and heterodimers.

It is found in the cell membrane. The chain is CASP-like protein 2D1 from Glycine max (Soybean).